The sequence spans 186 residues: ATP synthase subunit delta (186 aa).

It belongs to the ATPase delta chain family. As to quaternary structure, F-type ATPases have 2 components, F(1) - the catalytic core - and F(0) - the membrane proton channel. F(1) has five subunits: alpha(3), beta(3), gamma(1), delta(1), epsilon(1). F(0) has three main subunits: a(1), b(2) and c(10-14). The alpha and beta chains form an alternating ring which encloses part of the gamma chain. F(1) is attached to F(0) by a central stalk formed by the gamma and epsilon chains, while a peripheral stalk is formed by the delta and b chains.

The protein resides in the cell inner membrane. In terms of biological role, f(1)F(0) ATP synthase produces ATP from ADP in the presence of a proton or sodium gradient. F-type ATPases consist of two structural domains, F(1) containing the extramembraneous catalytic core and F(0) containing the membrane proton channel, linked together by a central stalk and a peripheral stalk. During catalysis, ATP synthesis in the catalytic domain of F(1) is coupled via a rotary mechanism of the central stalk subunits to proton translocation. Functionally, this protein is part of the stalk that links CF(0) to CF(1). It either transmits conformational changes from CF(0) to CF(1) or is implicated in proton conduction. This Leptospira interrogans serogroup Icterohaemorrhagiae serovar copenhageni (strain Fiocruz L1-130) protein is ATP synthase subunit delta.